The primary structure comprises 322 residues: Pre-mRNA-splicing factor NTR2 (322 aa).

The tract at residues 1 to 30 (MAIKKRNKIRLPSGSPEEVGIDGSAHKPMQ) is disordered. Residue serine 40 is modified to Phosphoserine. The tract at residues 113 to 137 (LLSDSSEAGSSSEGEHISSIPTRGE) is disordered. Residues 115-132 (SDSSEAGSSSEGEHISSI) are compositionally biased toward low complexity. A phosphoserine mark is found at serine 153 and serine 197.

Component of the NTR complex (NTC-related complex), composed of NTR1, NTR2 and PRP43. Interacts with CLF1, NTR1 and PRP43.

It is found in the cytoplasm. Its subcellular location is the nucleus. Its function is as follows. Involved in pre-mRNA splicing and spliceosome disassembly. Promotes release of excised lariat intron from the spliceosome by acting as a receptor for PRP43. This targeting of PRP43 leads to disassembly of the spliceosome with the separation of the U2, U5, U6 snRNPs and the NTC complex. The chain is Pre-mRNA-splicing factor NTR2 (NTR2) from Saccharomyces cerevisiae (strain ATCC 204508 / S288c) (Baker's yeast).